Consider the following 863-residue polypeptide: Glycogen phosphorylase (863 aa).

Residue Lys618 is modified to N6-(pyridoxal phosphate)lysine.

Belongs to the glycogen phosphorylase family. The cofactor is pyridoxal 5'-phosphate.

The catalysed reaction is [(1-&gt;4)-alpha-D-glucosyl](n) + phosphate = [(1-&gt;4)-alpha-D-glucosyl](n-1) + alpha-D-glucose 1-phosphate. Functionally, phosphorylase is an important allosteric enzyme in carbohydrate metabolism. Enzymes from different sources differ in their regulatory mechanisms and in their natural substrates. However, all known phosphorylases share catalytic and structural properties. This is Glycogen phosphorylase (glgP) from Mycobacterium bovis (strain ATCC BAA-935 / AF2122/97).